Consider the following 433-residue polypeptide: MKQYLEIESVFAREILDSRGNPTVEVEVIAEGGFVGRAAVPSGASTGAFEAVELRDNDKNRYLGKGVQKAVENVNNIIAPEVEGMNVFDQAAVDNLMISLDGTPNKSKLGANAILGVSLATAKAAAEALGLSLYQYIGGVNAKTLPVPMMNIINGGKHADNSVNIQEFMIMPVGASSFRHALQMCAEVFHNLKKVLKDKGYSTAVGDEGGFAPNLKTDEEAIQVILEAVEKAGYKPGDDFRLAIDAASTEMYQEDGTYLFWKSGVKKTKEEMINYWEELVNKYPIISLEDGVAEEDWEGWKMLTERLGKRIQLVGDDLFVTNTTRLKKGIELGVANSILIKVNQIGTLTETLDAIEMANRAGYTAVVSHRSGETEDATIADIAVATNAGQIKTGAPSRTDRVAKYNQLLRIEEEIGAVSRYPGLDAWFNLKKK.

Q166 is a (2R)-2-phosphoglycerate binding site. Residue E208 is the Proton donor of the active site. Residues D245, E289, and D316 each coordinate Mg(2+). (2R)-2-phosphoglycerate contacts are provided by K341, R370, S371, and K392. K341 functions as the Proton acceptor in the catalytic mechanism.

It belongs to the enolase family. The cofactor is Mg(2+).

The protein resides in the cytoplasm. The protein localises to the secreted. It is found in the cell surface. The enzyme catalyses (2R)-2-phosphoglycerate = phosphoenolpyruvate + H2O. It participates in carbohydrate degradation; glycolysis; pyruvate from D-glyceraldehyde 3-phosphate: step 4/5. Its function is as follows. Catalyzes the reversible conversion of 2-phosphoglycerate (2-PG) into phosphoenolpyruvate (PEP). It is essential for the degradation of carbohydrates via glycolysis. This Acetivibrio thermocellus (strain ATCC 27405 / DSM 1237 / JCM 9322 / NBRC 103400 / NCIMB 10682 / NRRL B-4536 / VPI 7372) (Clostridium thermocellum) protein is Enolase.